The chain runs to 251 residues: MKLGVSTSLFLDTDKNLSDALEILEERVKYVELGCDGNLNVMSDGNIELAQSYDLKYTLHCPITDLNLSSYRERIRKVSLDFVRDVLEVAIKVDAKLIVLHPGYCVFKYDYEKALNSLIKSLNDLNNIQEEFGVQITIENMPSYDMFMFRNPDKEIIENLGELKITLDIGHSFLNKNIENFLKISDKIAHIHIHDNNGEFDEHLCIGKGKINFNNFKKDLKKINAIKMIELQNKSIDDLDLCIDNLKEILR.

To M.jannaschii MJ1311.

This is an uncharacterized protein from Methanocaldococcus jannaschii (strain ATCC 43067 / DSM 2661 / JAL-1 / JCM 10045 / NBRC 100440) (Methanococcus jannaschii).